The following is a 226-amino-acid chain: Urease accessory protein UreF (226 aa).

The protein belongs to the UreF family. In terms of assembly, ureD, UreF and UreG form a complex that acts as a GTP-hydrolysis-dependent molecular chaperone, activating the urease apoprotein by helping to assemble the nickel containing metallocenter of UreC. The UreE protein probably delivers the nickel.

It localises to the cytoplasm. Its function is as follows. Required for maturation of urease via the functional incorporation of the urease nickel metallocenter. The chain is Urease accessory protein UreF from Janthinobacterium sp. (strain Marseille) (Minibacterium massiliensis).